The sequence spans 100 residues: Chorion class A protein M2774 (100 aa).

The left arm stretch occupies residues 1-33; sequence GGGWNGWNGLGGGWNGLGVGWSRLDGGYGGGCG. The interval 34-81 is central domain; that stretch reads SYGGEGIGNVGVADELPVGGVTAVGGRVPIIGGVEYGGPARAAGAVSI. The interval 82–100 is right arm; that stretch reads CGHCAPTCGCGRAGLGGYY.

Belongs to the chorion protein family.

This protein is one of many from the eggshell of the silk moth. In Bombyx mori (Silk moth), this protein is Chorion class A protein M2774.